We begin with the raw amino-acid sequence, 642 residues long: Threonine--tRNA ligase (642 aa).

The 61-residue stretch at 1–61 (MPIITLPDGS…EHDASLEIIT (61 aa)) folds into the TGS domain. The segment at 244-535 (DHRKIGKQLD…LIEEYAGFFP (292 aa)) is catalytic. 3 residues coordinate Zn(2+): C335, H386, and H512.

This sequence belongs to the class-II aminoacyl-tRNA synthetase family. As to quaternary structure, homodimer. It depends on Zn(2+) as a cofactor.

The protein resides in the cytoplasm. It carries out the reaction tRNA(Thr) + L-threonine + ATP = L-threonyl-tRNA(Thr) + AMP + diphosphate + H(+). In terms of biological role, catalyzes the attachment of threonine to tRNA(Thr) in a two-step reaction: L-threonine is first activated by ATP to form Thr-AMP and then transferred to the acceptor end of tRNA(Thr). Also edits incorrectly charged L-seryl-tRNA(Thr). The chain is Threonine--tRNA ligase from Vibrio cholerae serotype O1 (strain ATCC 39541 / Classical Ogawa 395 / O395).